The following is a 215-amino-acid chain: Oligoribonuclease (215 aa).

The Exonuclease domain occupies 5–170 (LVWIDCEMTG…ADIHESIREL (166 aa)). Tyr127 is a catalytic residue. The segment at 196–215 (LGPPGKDAADTDSAAGHTTG) is disordered.

It belongs to the oligoribonuclease family.

It is found in the cytoplasm. 3'-to-5' exoribonuclease specific for small oligoribonucleotides. This chain is Oligoribonuclease, found in Mycobacterium sp. (strain JLS).